Reading from the N-terminus, the 150-residue chain is Photosystem I reaction center subunit XI (150 aa).

Residues 1-72 lie on the Stromal side of the membrane; sequence MSDFIQSYNN…DKLGPLRNTD (72 aa). The helical transmembrane segment at 73 to 93 threads the bilayer; the sequence is VALLSGFLSAVGLIIILTVCL. Over 94–118 the chain is Lumenal; the sequence is SMYGNVSFDKDDAKDLLQTTEGWGQ. A helical transmembrane segment spans residues 119–139; that stretch reads FTAGFLVGAVGGSGFAYLLLA. Residues 140 to 150 are Stromal-facing; that stretch reads NIPVLQNLGLS.

This sequence belongs to the PsaL family.

The protein resides in the plastid. It localises to the chloroplast thylakoid membrane. The chain is Photosystem I reaction center subunit XI from Gracilaria tenuistipitata var. liui (Red alga).